The following is a 105-amino-acid chain: Small ribosomal subunit protein uS10 (105 aa).

This sequence belongs to the universal ribosomal protein uS10 family. Part of the 30S ribosomal subunit.

Its function is as follows. Involved in the binding of tRNA to the ribosomes. The protein is Small ribosomal subunit protein uS10 of Chlamydia abortus (strain DSM 27085 / S26/3) (Chlamydophila abortus).